The chain runs to 114 residues: Large ribosomal subunit protein bL21c (114 aa).

It belongs to the bacterial ribosomal protein bL21 family. As to quaternary structure, part of the 50S ribosomal subunit.

The protein resides in the plastid. It localises to the chloroplast. Functionally, this protein binds to 23S rRNA. This chain is Large ribosomal subunit protein bL21c, found in Staurastrum punctulatum (Green alga).